The primary structure comprises 280 residues: 4-diphosphocytidyl-2-C-methyl-D-erythritol kinase (280 aa).

Lysine 8 is a catalytic residue. 91 to 101 (PIEAGLAGGSS) lines the ATP pocket. Aspartate 133 is an active-site residue.

The protein belongs to the GHMP kinase family. IspE subfamily.

The enzyme catalyses 4-CDP-2-C-methyl-D-erythritol + ATP = 4-CDP-2-C-methyl-D-erythritol 2-phosphate + ADP + H(+). The protein operates within isoprenoid biosynthesis; isopentenyl diphosphate biosynthesis via DXP pathway; isopentenyl diphosphate from 1-deoxy-D-xylulose 5-phosphate: step 3/6. In terms of biological role, catalyzes the phosphorylation of the position 2 hydroxy group of 4-diphosphocytidyl-2C-methyl-D-erythritol. This chain is 4-diphosphocytidyl-2-C-methyl-D-erythritol kinase, found in Clostridium tetani (strain Massachusetts / E88).